The sequence spans 310 residues: Inner membrane protein YfdC (310 aa).

A compositionally biased stretch (basic and acidic residues) spans 1–12 (MDNDKIDQHSDE). A disordered region spans residues 1–27 (MDNDKIDQHSDEIEVESEEKERGKKIE). The Cytoplasmic segment spans residues 1–58 (MDNDKIDQHSDEIEVESEEKERGKKIEIDEDRLPSRAMAIHEHIRQDGEKELERDAMA). The helical transmembrane segment at 59–81 (LLWSAIAAGLSMGASLLAKGIFQ) threads the bilayer. Residues 82 to 90 (VELEGVPGS) lie on the Periplasmic side of the membrane. Residues 91–113 (FLLENLGYTFGFIIVIMARQQLF) traverse the membrane as a helical segment. The Cytoplasmic portion of the chain corresponds to 114-133 (TENTVTAVLPVMQKPTMSNV). Residues 134–156 (GLLIRLWGVVLLGNILGTGIAAW) form a helical membrane-spanning segment. Residues 157–186 (AFEYMPIFNEETRDAFVKIGMDVMKNTPSE) lie on the Periplasmic side of the membrane. A helical membrane pass occupies residues 187 to 206 (MFANAIISGWLIATMVWMFP). Topologically, residues 207–212 (AAGAAK) are cytoplasmic. The chain crosses the membrane as a helical span at residues 213 to 232 (IVVIILMTWLIALGDTTHIV). The Periplasmic portion of the chain corresponds to 233 to 251 (VGSVEILYLVFNGTLHWSD). The helical transmembrane segment at 252 to 274 (FIWPFALPTLAGNICGGTFIFAL) threads the bilayer. The Cytoplasmic segment spans residues 275–310 (MSHAQIRNDMSNKRKAEARQKAERAENIKKNYKNPA). The segment covering 291–303 (EARQKAERAENIK) has biased composition (basic and acidic residues). Residues 291–310 (EARQKAERAENIKKNYKNPA) form a disordered region.

The protein resides in the cell inner membrane. This Escherichia coli (strain K12) protein is Inner membrane protein YfdC (yfdC).